Here is a 1474-residue protein sequence, read N- to C-terminus: Adhesion G protein-coupled receptor L1 (1474 aa).

The N-terminal stretch at 1 to 24 (MARLAAVLWNLCVTAVLVTSATQG) is a signal peptide. At 25-858 (LSRAGLPFGL…EIYQGRINEL (834 aa)) the chain is on the extracellular side. The SUEL-type lectin domain occupies 40–129 (ACEGYPIELR…KYLEVQYDCV (90 aa)). 5 cysteine pairs are disulfide-bonded: C41–C71, C50–C128, C83–C115, C96–C102, and C140–C322. Alpha-L-rhamnose is bound at residue E42. N98 is a glycosylation site (N-linked (GlcNAc...) asparagine). 117–120 (GTYK) provides a ligand contact to alpha-L-rhamnose. Positions 139–398 (VCPGTLQKVL…VVRYSLEFGP (260 aa)) constitute an Olfactomedin-like domain. The tract at residues 400 to 434 (DPSAGPATSPPLSTTTTARPTPLTSTASPAATTPL) is disordered. Over residues 405 to 434 (PATSPPLSTTTTARPTPLTSTASPAATTPL) the composition is skewed to low complexity. 2 disulfides stabilise this stretch: C480–C515 and C503–C532. N-linked (GlcNAc...) asparagine glycans are attached at residues N531, N640, N742, N801, N806, and N827. The GAIN-B domain maps to 669 to 851 (PARFLAAKEN…AVLMAHREIY (183 aa)). Intrachain disulfides connect C802–C833 and C821–C835. Positions 802 to 851 (CSFWNYSERSMLGYWSTQGCRLVESNKTHTTCACSHLTNFAVLMAHREIY) are GPS. A helical membrane pass occupies residues 859-879 (LLSVITWVGIVISLVCLAICI). Over 880-893 (STFCFLRGLQTDRN) the chain is Cytoplasmic. Residues 894 to 914 (TIHKNLCINLFLAELLFLVGI) form a helical membrane-spanning segment. Over 915-920 (DKTQYE) the chain is Extracellular. Residues 921 to 941 (IACPIFAGLLHYFFLAAFSWL) form a helical membrane-spanning segment. Over 942–964 (CLEGVHLYLLLVEVFESEYSRTK) the chain is Cytoplasmic. A helical membrane pass occupies residues 965 to 985 (YYYLGGYCFPALVVGIAAAID). Residues 986–1002 (YRSYGTEKACWLRVDNY) are Extracellular-facing. Residues 1003 to 1023 (FIWSFIGPVSFVIVVNLVFLM) traverse the membrane as a helical segment. The Cytoplasmic portion of the chain corresponds to 1024-1050 (VTLHKMIRSSSVLKPDSSRLDNIKSWA). Residues 1051–1071 (LGAIALLFLLGLTWAFGLLFI) form a helical membrane-spanning segment. Residues 1072-1075 (NKES) are Extracellular-facing. The chain crosses the membrane as a helical span at residues 1076-1096 (VVMAYLFTTFNAFQGVFIFVF). Residues 1097-1474 (HCALQKKVHK…DGQMQLVTSL (378 aa)) are Cytoplasmic-facing. R1194 is subject to Omega-N-methylarginine. S1220 bears the Phosphoserine mark. 4 disordered regions span residues 1248-1273 (FNNS…RGRN), 1294-1328 (RGSS…PGGA), 1360-1429 (ESES…SRPP), and 1451-1474 (YLAA…VTSL). Composition is skewed to pro residues over residues 1302–1314 (GPPP…PPVP) and 1408–1420 (ALPP…PGPP). A Phosphoserine modification is found at S1473.

It belongs to the G-protein coupled receptor 2 family. Adhesion G-protein coupled receptor (ADGR) subfamily. Forms a heterodimer, consisting of a large extracellular region (p120) non-covalently linked to a seven-transmembrane moiety (p85). Interacts with syntaxin and with proteins of the SHANK family via the PDZ domain. Interacts (via extracellular domain) with FLRT1, FLRT2 and FLRT3 (via extracellular domain). In terms of processing, autoproteolytically cleaved into 2 subunits, an extracellular subunit and a seven-transmembrane subunit. This proteolytic processing takes place early in the biosynthetic pathway, either in the endoplasmic reticulum or in the early compartment of the Golgi apparatus.

Its subcellular location is the cell membrane. The protein resides in the cell projection. The protein localises to the axon. It localises to the growth cone. It is found in the synapse. Its subcellular location is the presynaptic cell membrane. The protein resides in the synaptosome. Its function is as follows. Calcium-independent receptor of high affinity for alpha-latrotoxin, an excitatory neurotoxin present in black widow spider venom which triggers massive exocytosis from neurons and neuroendocrine cells. Receptor for TENM2 that mediates heterophilic synaptic cell-cell contact and postsynaptic specialization. Receptor probably implicated in the regulation of exocytosis. This is Adhesion G protein-coupled receptor L1 from Homo sapiens (Human).